The following is a 202-amino-acid chain: MGTPSDRTTTLSLCLAVCVVVIAVGTGWASEAGEGAHQVDSAAQMKDFGWRVLNFAVLAALLGWAIAKAQVKKALNERQVKIERSLREAEQSRDAAEQKLREYSGKLEHASREIEEMRGAMLRESEQEKQRIIAEARAAAEKIAGQATLSAEHEVLKARSALQAEAGRLAVQLAATKLAGAIGKEDHDLYVDDYLKKVEQFK.

Residues 9–29 (TTLSLCLAVCVVVIAVGTGWA) traverse the membrane as a helical segment.

The protein belongs to the ATPase B chain family. F-type ATPases have 2 components, F(1) - the catalytic core - and F(0) - the membrane proton channel. F(1) has five subunits: alpha(3), beta(3), gamma(1), delta(1), epsilon(1). F(0) has three main subunits: a(1), b(2) and c(10-14). The alpha and beta chains form an alternating ring which encloses part of the gamma chain. F(1) is attached to F(0) by a central stalk formed by the gamma and epsilon chains, while a peripheral stalk is formed by the delta and b chains.

Its subcellular location is the cell inner membrane. F(1)F(0) ATP synthase produces ATP from ADP in the presence of a proton or sodium gradient. F-type ATPases consist of two structural domains, F(1) containing the extramembraneous catalytic core and F(0) containing the membrane proton channel, linked together by a central stalk and a peripheral stalk. During catalysis, ATP synthesis in the catalytic domain of F(1) is coupled via a rotary mechanism of the central stalk subunits to proton translocation. In terms of biological role, component of the F(0) channel, it forms part of the peripheral stalk, linking F(1) to F(0). This chain is ATP synthase subunit b, found in Pelobacter propionicus (strain DSM 2379 / NBRC 103807 / OttBd1).